A 455-amino-acid polypeptide reads, in one-letter code: Inactive peptidyl-prolyl cis-trans isomerase shutdown (455 aa).

The disordered stretch occupies residues 34–54 (SQQNHARDLGLDSDSDSDYED). The span at 44–54 (LDSDSDSDYED) shows a compositional bias: acidic residues. Residues 103 to 192 (KARVSVRYSG…LFKVEVIDYS (90 aa)) enclose the PPIase FKBP-type domain. TPR repeat units lie at residues 218–251 (AVDL…LNYC) and 303–336 (CKAL…QPAN).

It belongs to the FKBP6 family. As to quaternary structure, interacts with Hsp83. In terms of tissue distribution, strongly expressed in the germline stem cells and in 16-cell cysts. Present in the germ cells throughout embryogenesis. Defects are due to derepression of transposable elements and impaired piRNA biogenesis.

The protein localises to the cytoplasm. The protein resides in the cytoplasmic ribonucleoprotein granule. In terms of biological role, co-chaperone required during oogenesis to repress transposable elements and prevent their mobilization, which is essential for the germline integrity. Acts via the piRNA metabolic process, which mediates the repression of transposable elements during meiosis by forming complexes composed of piRNAs and Piwi proteins and govern the methylation and subsequent repression of transposons. Acts as a co-chaperone via its interaction with Hsp83/HSP90 and is required for the biogenesis of all three piRNA major populations. This is Inactive peptidyl-prolyl cis-trans isomerase shutdown from Drosophila melanogaster (Fruit fly).